The chain runs to 303 residues: Coenzyme PQQ synthesis protein B (303 aa).

Belongs to the PqqB family.

It functions in the pathway cofactor biosynthesis; pyrroloquinoline quinone biosynthesis. Functionally, may be involved in the transport of PQQ or its precursor to the periplasm. The chain is Coenzyme PQQ synthesis protein B from Pseudomonas fluorescens (strain Pf0-1).